Consider the following 458-residue polypeptide: 5-hydroxytryptamine receptor 2C (458 aa).

An N-terminal signal peptide occupies residues 1-32 (MVNLRNAVHSFLVHLIGLLVWQCDISVSPVAA). Over 33–55 (IVTDIFNTSDGGRFKFPDGVQNW) the chain is Extracellular. The chain crosses the membrane as a helical span at residues 56–80 (PALSIVVIIIMTIGGNILVIMAVSM). Residues 81–86 (EKKLHN) are Cytoplasmic-facing. The helical transmembrane segment at 87–111 (ATNYFLMSLAIADMLVGLLVMPLSL) threads the bilayer. Over 112–128 (LAILYDYVWPLPRYLCP) the chain is Extracellular. Cys-127 and Cys-207 are joined by a disulfide. The chain crosses the membrane as a helical span at residues 129–151 (VWISLDVLFSTASIMHLCAISLD). Thr-139 is a binding site for ergotamine. Residues 151–153 (DRY) carry the DRY motif; important for ligand-induced conformation changes motif. Topologically, residues 152 to 167 (RYVAIRNPIEHSRFNS) are cytoplasmic. A helical membrane pass occupies residues 168-189 (RTKAIMKIAIVWAISIGVSVPI). The Extracellular portion of the chain corresponds to 190–213 (PVIGLRDERKVFVNNTTCVLNDPN). Leu-209 contributes to the ergotamine binding site. The helical transmembrane segment at 214-236 (FVLIGSFVAFFIPLTIMVITYCL) threads the bilayer. Residues 237–311 (TIYVLRRQAL…AINNERKASK (75 aa)) are Cytoplasmic-facing. Residues 274-301 (EENSANPNQDQNARRRKKKERRPRGTMQ) are disordered. A compositionally biased stretch (basic residues) spans 287-297 (RRRKKKERRPR). A helical transmembrane segment spans residues 312–336 (VLGIVFFVFLIMWCPFFITNILSVL). Cys-337 and Cys-341 are joined by a disulfide. At 337-347 (CEKSCNQKLME) the chain is on the extracellular side. A helical transmembrane segment spans residues 348-370 (KLLNVFVWIGYVCSGINPLVYTL). An NPxxY motif; important for ligand-induced conformation changes and signaling motif is present at residues 364–368 (NPLVY). Over 371–458 (FNKIYRRAFS…SVVSERISSV (88 aa)) the chain is Cytoplasmic. A PDZ-binding motif is present at residues 456-458 (SSV).

This sequence belongs to the G-protein coupled receptor 1 family. Interacts with MPDZ. Interacts with ARRB2. Interacts with MPP3; this interaction stabilizes the receptor at the plasma membrane and prevents the desensitization of the HTR2C receptor-mediated calcium response.

The protein resides in the cell membrane. Its function is as follows. G-protein coupled receptor for 5-hydroxytryptamine (serotonin). Also functions as a receptor for various drugs and psychoactive substances, including ergot alkaloid derivatives, 1-2,5,-dimethoxy-4-iodophenyl-2-aminopropane (DOI) and lysergic acid diethylamide (LSD). Ligand binding causes a conformation change that triggers signaling via guanine nucleotide-binding proteins (G proteins) and modulates the activity of downstream effectors. HTR2C is coupled to G(q)/G(11) G alpha proteins and activates phospholipase C-beta, releasing diacylglycerol (DAG) and inositol 1,4,5-trisphosphate (IP3) second messengers that modulate the activity of phosphatidylinositol 3-kinase and promote the release of Ca(2+) ions from intracellular stores, respectively. Beta-arrestin family members inhibit signaling via G proteins and mediate activation of alternative signaling pathways. Regulates neuronal activity via the activation of short transient receptor potential calcium channels in the brain, and thereby modulates the activation of pro-opiomelanocortin neurons and the release of CRH that then regulates the release of corticosterone. Plays a role in the regulation of appetite and eating behavior, responses to anxiogenic stimuli and stress. Plays a role in insulin sensitivity and glucose homeostasis. The protein is 5-hydroxytryptamine receptor 2C of Pan troglodytes (Chimpanzee).